The chain runs to 234 residues: Purine nucleoside phosphorylase DeoD-type (234 aa).

Histidine 5 serves as a coordination point for a purine D-ribonucleoside. Phosphate-binding positions include glycine 21, arginine 25, arginine 44, and arginine 88–threonine 91. A purine D-ribonucleoside is bound by residues glutamate 178–glutamate 180 and serine 202–aspartate 203. Aspartate 203 (proton donor) is an active-site residue.

The protein belongs to the PNP/UDP phosphorylase family. Homohexamer; trimer of homodimers.

The enzyme catalyses a purine D-ribonucleoside + phosphate = a purine nucleobase + alpha-D-ribose 1-phosphate. The catalysed reaction is a purine 2'-deoxy-D-ribonucleoside + phosphate = a purine nucleobase + 2-deoxy-alpha-D-ribose 1-phosphate. Catalyzes the reversible phosphorolytic breakdown of the N-glycosidic bond in the beta-(deoxy)ribonucleoside molecules, with the formation of the corresponding free purine bases and pentose-1-phosphate. The sequence is that of Purine nucleoside phosphorylase DeoD-type from Lactococcus lactis subsp. lactis (strain IL1403) (Streptococcus lactis).